We begin with the raw amino-acid sequence, 154 residues long: Protein E6 (154 aa).

2 zinc fingers span residues 30-66 (CVFCKTVLKTAEVLAFAFRELYVVWRDDFPHAACPRC) and 103-139 (CCKCHKPLSPVEKTNHIVKKTQFFKLKDSWTGYCLHC).

Belongs to the papillomaviridae E6 protein family. In terms of assembly, forms homodimers. Interacts with ubiquitin-protein ligase UBE3A/E6-AP; this interaction stimulates UBE3A ubiquitin activity. Interacts with host TP53 and EP300; this interaction inhibits TP53 activity.

The protein localises to the host cytoplasm. It localises to the host nucleus. Functionally, plays a major role in the induction and maintenance of cellular transformation. E6 associates with host UBE3A/E6-AP ubiquitin-protein ligase and modulates its activity. Sequesters tumor suppressor TP53 in the host cytoplasm and modulates its activity by interacting with host EP300 that results in the reduction of TP53 acetylation and activation. In turn, apoptosis induced by DNA damage is inhibited. E6 also protects host keratinocytes from apoptosis by mediating the degradation of host BAK1. May also inhibit host immune response. The polypeptide is Protein E6 (Homo sapiens (Human)).